The chain runs to 571 residues: Glutamine--tRNA ligase (571 aa).

Residues 35-45 (PEPNGYLHIGH) carry the 'HIGH' region motif. ATP-binding positions include 36–38 (EPN) and 42–48 (HIGHAKS). Asp68 and Tyr213 together coordinate L-glutamine. Residues Thr232, 262–263 (RL), and 270–272 (LSK) each bind ATP. Residues 269–273 (ILSKR) carry the 'KMSKS' region motif.

It belongs to the class-I aminoacyl-tRNA synthetase family. Monomer.

It is found in the cytoplasm. It carries out the reaction tRNA(Gln) + L-glutamine + ATP = L-glutaminyl-tRNA(Gln) + AMP + diphosphate. This chain is Glutamine--tRNA ligase, found in Buchnera aphidicola subsp. Acyrthosiphon pisum (strain APS) (Acyrthosiphon pisum symbiotic bacterium).